The primary structure comprises 494 residues: Serine/arginine-rich splicing factor 4 (494 aa).

One can recognise an RRM 1 domain in the interval 2 to 72 (PRVYIGRLSY…ERVIVEHARG (71 aa)). Disordered stretches follow at residues 72 to 95 (GPRRDGSYGSGRSGYGYRRSGRDK) and 169 to 494 (KIRL…HSRS). Phosphoserine occurs at positions 78 and 84. Residues 104-177 (YRLIVENLSS…RKIRLVEDKP (74 aa)) enclose the RRM 2 domain. Basic residues-rich tracts occupy residues 179–206 (SRRRRSYSRSRSHSRSRSRSRHSRKSRS) and 214–246 (SHSKSRSRSRSGSRSRSKSRSRSQSRSRSKKEK). Residues 247-256 (SRSPSKEKSR) are compositionally biased toward basic and acidic residues. Residues 257–267 (SRSHSAGKSRS) show a composition bias toward basic residues. The span at 268-278 (KSKDQAEEKIQ) shows a compositional bias: basic and acidic residues. The span at 286-302 (PKSRSPSRHKSKSKSRS) shows a compositional bias: basic residues. Residues serine 288, serine 290, and serine 292 each carry the phosphoserine modification. Residues 303 to 327 (RSQERRVEEEKRGSVSRGRSQEKSL) show a composition bias toward basic and acidic residues. Basic residues-rich tracts occupy residues 328-359 (RQSRSRSRSKGGSRSRSRSRSKSKDKRKGRKR) and 367-382 (RSRSRSKSERSRKRGS). The span at 411–431 (VSKEREHAKSESSQREGRGES) shows a compositional bias: basic and acidic residues. Phosphoserine is present on residues serine 431, serine 446, serine 456, serine 458, and serine 460. The segment covering 449–460 (KSKPNLPSESRS) has biased composition (low complexity). A compositionally biased stretch (basic residues) spans 461 to 494 (RSKSASKTRSRSKSRSRSASRSPSRSRSRSHSRS).

This sequence belongs to the splicing factor SR family. As to quaternary structure, found in a pre-mRNA splicing complex with SRSF4/SFRS4, SRSF5/SFRS5, SNRNP70, SNRPA1, SRRM1 and SRRM2. Interacts with PNN. Post-translationally, extensively phosphorylated on serine residues in the RS domain.

It is found in the nucleus speckle. Functionally, plays a role in alternative splice site selection during pre-mRNA splicing. Represses the splicing of MAPT/Tau exon 10. The polypeptide is Serine/arginine-rich splicing factor 4 (SRSF4) (Homo sapiens (Human)).